Here is a 150-residue protein sequence, read N- to C-terminus: Regulatory protein RecX (150 aa).

The protein belongs to the RecX family.

It localises to the cytoplasm. In terms of biological role, modulates RecA activity. In Acidithiobacillus ferrooxidans (strain ATCC 23270 / DSM 14882 / CIP 104768 / NCIMB 8455) (Ferrobacillus ferrooxidans (strain ATCC 23270)), this protein is Regulatory protein RecX.